The chain runs to 405 residues: MAKGTFERTKPHVNVGTIGHVDHGKTTLTAAITFTAAAMDPTVEKLAYDQIDKAPEEKARGITINTAHVEYNTPARHYSHVDCPGHADYVKNMITGAAQMDGAILVVSSADGPMPQTREHILLARQVGVPYIVVFMNKVDMVDDEELLELVEMEVRELLSKYEFPGDDLPVIKGSALQALEALQQNPKTARGENPWVDKIWELLDAIDAYIPTPERATDKTFLMPVEDVFTITGRGTVATGRVERGVCKVGDEVEIVGLRDTKKTTITGVEMHRKLLDQGMAGDNVGVLLRGVARDDVERGQVLAKPGSITPHTKFEASVYVLSKDEGGRHSAFFGGYRPQFYFRTTDVTGVVELPAGVEMVMPGDNVSFTVELIKPIAMEEGLRFAIREGGRTVGAGVVTKVLE.

The 206-residue stretch at Lys-10–Glu-215 folds into the tr-type G domain. The interval Gly-19–Thr-26 is G1. Gly-19 to Thr-26 contributes to the GTP binding site. Residue Thr-26 participates in Mg(2+) binding. The interval Gly-61–Asn-65 is G2. The tract at residues Asp-82–Gly-85 is G3. GTP-binding positions include Asp-82–His-86 and Asn-137–Asp-140. The G4 stretch occupies residues Asn-137–Asp-140. A G5 region spans residues Ser-175–Leu-177.

It belongs to the TRAFAC class translation factor GTPase superfamily. Classic translation factor GTPase family. EF-Tu/EF-1A subfamily. As to quaternary structure, monomer.

It is found in the cytoplasm. It catalyses the reaction GTP + H2O = GDP + phosphate + H(+). Functionally, GTP hydrolase that promotes the GTP-dependent binding of aminoacyl-tRNA to the A-site of ribosomes during protein biosynthesis. The sequence is that of Elongation factor Tu from Deinococcus geothermalis (strain DSM 11300 / CIP 105573 / AG-3a).